The primary structure comprises 1463 residues: DNA-directed RNA polymerase subunit beta'' (1463 aa).

Residues Cys-239, Cys-312, Cys-319, and Cys-322 each coordinate Zn(2+). 2 disordered regions span residues Thr-836–Met-869 and Thr-987–Arg-1007. Polar residues predominate over residues Ala-860–Met-869. Residues Thr-987–Ala-996 show a composition bias toward basic residues. Over residues Ser-997 to Arg-1007 the composition is skewed to polar residues.

The protein belongs to the RNA polymerase beta' chain family. RpoC2 subfamily. As to quaternary structure, in plastids the minimal PEP RNA polymerase catalytic core is composed of four subunits: alpha, beta, beta', and beta''. When a (nuclear-encoded) sigma factor is associated with the core the holoenzyme is formed, which can initiate transcription. Zn(2+) serves as cofactor.

It localises to the plastid. It is found in the chloroplast. It catalyses the reaction RNA(n) + a ribonucleoside 5'-triphosphate = RNA(n+1) + diphosphate. DNA-dependent RNA polymerase catalyzes the transcription of DNA into RNA using the four ribonucleoside triphosphates as substrates. The polypeptide is DNA-directed RNA polymerase subunit beta'' (Nephroselmis olivacea (Green alga)).